The chain runs to 562 residues: Arginine--tRNA ligase (562 aa).

A 'HIGH' region motif is present at residues 129–139 (ANPTGPLHVGH).

The protein belongs to the class-I aminoacyl-tRNA synthetase family. In terms of assembly, monomer.

The protein resides in the cytoplasm. The catalysed reaction is tRNA(Arg) + L-arginine + ATP = L-arginyl-tRNA(Arg) + AMP + diphosphate. The chain is Arginine--tRNA ligase from Stenotrophomonas maltophilia (strain K279a).